The sequence spans 219 residues: Interleukin-12 subunit alpha (219 aa).

A signal peptide spans 1 to 22 (MCPARSLLLVATLVLLDYLSLA). Residues Asn24 and Asn93 are each glycosylated (N-linked (GlcNAc...) asparagine). Intrachain disulfides connect Cys37–Cys110, Cys64–Cys196, and Cys85–Cys123.

Belongs to the IL-6 superfamily. In terms of assembly, heterodimer with IL12B; disulfide-linked. This heterodimer is known as interleukin IL-12. Heterodimer with EBI3/IL27B; not disulfide-linked. This heterodimer is known as interleukin IL-35. Interacts with NBR1; this interaction promotes IL-12 secretion.

It localises to the secreted. Heterodimerizes with IL12B to form the IL-12 cytokine or with EBI3/IL27B to form the IL-35 cytokine. IL-12 is primarily produced by professional antigen-presenting cells (APCs) such as B-cells and dendritic cells (DCs) as well as macrophages and granulocytes and regulates T-cell and natural killer-cell responses, induces the production of interferon-gamma (IFN-gamma), favors the differentiation of T-helper 1 (Th1) cells and is an important link between innate resistance and adaptive immunity. Mechanistically, exerts its biological effects through a receptor composed of IL12R1 and IL12R2 subunits. Binding to the receptor results in the rapid tyrosine phosphorylation of a number of cellular substrates including the JAK family kinases TYK2 and JAK2. In turn, recruited STAT4 gets phosphorylated and translocates to the nucleus where it regulates cytokine/growth factor responsive genes. As part of IL-35, plays essential roles in maintaining the immune homeostasis of the liver microenvironment and also functions as an immune-suppressive cytokine. Mediates biological events through unconventional receptors composed of IL12RB2 and gp130/IL6ST heterodimers or homodimers. Signaling requires the transcription factors STAT1 and STAT4, which form a unique heterodimer that binds to distinct DNA sites. This is Interleukin-12 subunit alpha (IL12A) from Papio anubis (Olive baboon).